Here is a 458-residue protein sequence, read N- to C-terminus: Argininosuccinate lyase (458 aa).

Belongs to the lyase 1 family. Argininosuccinate lyase subfamily.

It is found in the cytoplasm. The enzyme catalyses 2-(N(omega)-L-arginino)succinate = fumarate + L-arginine. It functions in the pathway amino-acid biosynthesis; L-arginine biosynthesis; L-arginine from L-ornithine and carbamoyl phosphate: step 3/3. In Hydrogenobaculum sp. (strain Y04AAS1), this protein is Argininosuccinate lyase.